An 893-amino-acid polypeptide reads, in one-letter code: Ubiquitin-like protease 2 (893 aa).

Residues 538–800 (PVVLLVKDIK…YNLILQQADK (263 aa)) form a protease region. Catalysis depends on residues His-644, Asp-678, and Cys-743.

Belongs to the peptidase C48 family.

It localises to the nucleus. Its subcellular location is the cytoplasm. It is found in the cytosol. In terms of biological role, protease that catalyzes two essential functions in the smo-1 pathway: processing of full-length smo-1 to their mature forms and deconjugation of smo-1 from targeted proteins. May deconjugate smo-1 from the cadherin protein hmr-1 and plays a role in its recruitment to and the maintenance of adherens junctions. Required for epidermal morphogenesis during embryonic development. This chain is Ubiquitin-like protease 2, found in Caenorhabditis elegans.